Reading from the N-terminus, the 336-residue chain is Nicotinate-nucleotide--dimethylbenzimidazole phosphoribosyltransferase (336 aa).

Glu304 (proton acceptor) is an active-site residue.

It belongs to the CobT family.

It carries out the reaction 5,6-dimethylbenzimidazole + nicotinate beta-D-ribonucleotide = alpha-ribazole 5'-phosphate + nicotinate + H(+). It participates in nucleoside biosynthesis; alpha-ribazole biosynthesis; alpha-ribazole from 5,6-dimethylbenzimidazole: step 1/2. In terms of biological role, catalyzes the synthesis of alpha-ribazole-5'-phosphate from nicotinate mononucleotide (NAMN) and 5,6-dimethylbenzimidazole (DMB). In Ruegeria sp. (strain TM1040) (Silicibacter sp.), this protein is Nicotinate-nucleotide--dimethylbenzimidazole phosphoribosyltransferase.